The chain runs to 478 residues: uncharacterized protein (478 aa).

In terms of domain architecture, ATP-grasp spans Arg174–Ile366. Position 214 to 219 (Gly214 to Gly219) interacts with ATP. Arg339 is a catalytic residue.

This is an uncharacterized protein from Sinorhizobium fredii (strain NBRC 101917 / NGR234).